Consider the following 157-residue polypeptide: Protein-export protein SecB (157 aa).

This sequence belongs to the SecB family. In terms of assembly, homotetramer, a dimer of dimers. One homotetramer interacts with 1 SecA dimer.

The protein localises to the cytoplasm. One of the proteins required for the normal export of preproteins out of the cell cytoplasm. It is a molecular chaperone that binds to a subset of precursor proteins, maintaining them in a translocation-competent state. It also specifically binds to its receptor SecA. This chain is Protein-export protein SecB, found in Methylobacillus flagellatus (strain ATCC 51484 / DSM 6875 / VKM B-1610 / KT).